The chain runs to 141 residues: Large ribosomal subunit protein uL11 (141 aa).

The protein belongs to the universal ribosomal protein uL11 family. As to quaternary structure, part of the ribosomal stalk of the 50S ribosomal subunit. Interacts with L10 and the large rRNA to form the base of the stalk. L10 forms an elongated spine to which L12 dimers bind in a sequential fashion forming a multimeric L10(L12)X complex. In terms of processing, one or more lysine residues are methylated.

Its function is as follows. Forms part of the ribosomal stalk which helps the ribosome interact with GTP-bound translation factors. In Chlamydia felis (strain Fe/C-56) (Chlamydophila felis), this protein is Large ribosomal subunit protein uL11.